Consider the following 1622-residue polypeptide: MGFEPLDWYCKPVPNGVWTKTVDYAFGAYTPCAIDSFVLGISHLVLLILCLYRLWLITKDHKVDKFCLRSKWFSYFLALLAAYATAEPLFRLVMRISVLDLDGAGFPPYEAFMLVLEAFAWGSALVMTVVETKTYIHELRWYVRFAVIYALVGDMVLLNLVLSVKEYYGSFKLYLYISEVAVQVAFGTLLFVYFPNLDPYPGYTPVGTENSEDYEYEELPGGENICPERHANLFDSIFFSWLNPLMTLGSKRPLTEKDVWHLDTWDKTETLMRSFQKSWDKELEKPKPWLLRALNNSLGGRFWWGGFWKIGNDCSQFVGPLLLNELLKSMQLNEPAWIGYIYAISIFVGVVLGVLCEAQYFQNVMRVGYRLRSALIAAVFRKSLRLTNEGRKKFQTGKITNLMTTDAESLQQICQSLHTMWSAPFRIIVALVLLYQQLGVASIIGALFLVLMFPIQTVIISKTQKLTKEGLQRTDKRIGLMNEVLAAMDTVKCYAWENSFQSKVQTVRDDELSWFRKAQLLSAFNMFILNSIPVLVTVVSFGVFSLLGGDLTPARAFTSLSLFSVLRFPLFMLPNIITQMVNANVSLNRLEEVLSTEERVLLPNPPIEPGQPAISIRNGYFSWDSKADRPTLSNINLDIPLGSLVAVVGSTGEGKTSLISAMLGELPARSDATVTLRGSVAYVPQVSWIFNATVRDNILFGAPFDQEKYERVIDVTALQHDLELLPGGDLTEIGERGVNISGGQKQRVSMARAVYSNSDVCILDDPLSALDAHVGQQVFEKCIKRELGQTTRVLVTNQLHFLSQVDKILLVHEGTVKEEGTYEELCHSGPLFQRLMENAGKVEDYSEENGEAEVDQTSVKPVENGNANNLQKDGIETKNSKEGNSVLVKREERETGVVSWKVLERYQNALGGAWVVMMLVICYVLTQVFRVSSSTWLSEWTDSGTPKTHGPLFYNIVYALLSFGQVSVTLINSYWLIMSSLYAAKKMHDAMLGSILRAPMVFFQTNPLGRIINRFAKDMGDIDRTVAVFVNMFMGSIAQLLSTVILIGIVSTLSLWAIMPLLVVFYGAYLYYQNTSREIKRMDSTTRSPVYAQFGEALNGLSSIRAYKAYDRMAEINGRSMDNNIRFTLVNMAANRWLGIRLEVLGGLMVWLTASLAVMQNGKAANQQAYASTMGLLLSYALSITSSLTAVLRLASLAENSLNSVERVGNYIEIPSEAPLVIENNRPPPGWPSSGSIKFEDVVLRYRPELPPVLHGVSFLISPMDKVGIVGRTGAGKSSLLNALFRIVELEKGRILIDECDIGRFGLMDLRKVLGIIPQAPVLFSGTVRFNLDPFSEHNDADLWESLERAHLKDTIRRNPLGLDAEVTEAGENFSVGQRQLLSLARALLRRSKILVLDEATAAVDVRTDVLIQKTIREEFKSCTMLIIAHRLNTIIDCDKVLVLDSGKVQEFSSPENLLSNGESSFSKMVQSTGTANAEYLRSITLENKRTREANGDDSQPLEGQRKWQASSRWAAAAQFALAVSLTSSHNDLQSLEIEDDNSILKKTKDAVVTLRSVLEGKHDKEIEDSLNQSDISRERWWPSLYKMVEGLAVMSRLARNRMQHPDYNLEGKSFDWDNVEM.

9 consecutive transmembrane segments (helical) span residues 37–57 (FVLGISHLVLLILCLYRLWLI), 73–93 (FSYFLALLAAYATAEPLFRLV), 110–130 (EAFMLVLEAFAWGSALVMTVV), 145–165 (FAVIYALVGDMVLLNLVLSVK), 174–194 (YLYISEVAVQVAFGTLLFVYF), 336–356 (AWIGYIYAISIFVGVVLGVLC), 440–460 (VASIIGALFLVLMFPIQTVII), 527–547 (FILNSIPVLVTVVSFGVFSLL), and 557–577 (FTSLSLFSVLRFPLFMLPNII). Positions 302–582 (FWWGGFWKIG…LPNIITQMVN (281 aa)) constitute an ABC transmembrane type-1 1 domain. In terms of domain architecture, ABC transporter 1 spans 614-838 (ISIRNGYFSW…GPLFQRLMEN (225 aa)). 649–656 (GSTGEGKT) contributes to the ATP binding site. A disordered region spans residues 852-876 (AEVDQTSVKPVENGNANNLQKDGIE). Positions 855-871 (DQTSVKPVENGNANNLQ) are enriched in polar residues. A run of 6 helical transmembrane segments spans residues 909 to 929 (ALGGAWVVMMLVICYVLTQVF), 951 to 971 (PLFYNIVYALLSFGQVSVTLI), 1027 to 1049 (AVFVNMFMGSIAQLLSTVILIGI), 1053 to 1072 (LSLWAIMPLLVVFYGAYLYY), 1138 to 1158 (LGIRLEVLGGLMVWLTASLAV), and 1172 to 1192 (STMGLLLSYALSITSSLTAVL). The ABC transmembrane type-1 2 domain occupies 916–1200 (VMMLVICYVL…VLRLASLAEN (285 aa)). Residues 1231–1246 (WPSSGSIKFEDVVLRY) form an interaction with calmodulin and FKP42/TWD1 region. The region spanning 1237–1471 (IKFEDVVLRY…GESSFSKMVQ (235 aa)) is the ABC transporter 2 domain. 1271–1278 (GRTGAGKS) contributes to the ATP binding site.

The protein belongs to the ABC transporter superfamily. ABCC family. Conjugate transporter (TC 3.A.1.208) subfamily. Interacts with calmodulin (CaM), PAS1 and FKBP42/TWD1. As to expression, ubiquitous, with higher levels in leaves and stems and lower levels in roots. Localized in the root apex, root hair tips and root epidermis.

The protein resides in the vacuole membrane. It catalyses the reaction ATP + H2O + xenobioticSide 1 = ADP + phosphate + xenobioticSide 2.. In terms of biological role, pump for glutathione S-conjugates. Mediates the transport of S-(2,4-dinitrophenyl)-glutathione (DNP-GS), GSSG, cyanidin 3-glucoside-GS (C3G-GS) and metolachlor-GS (MOC-GS). In Arabidopsis thaliana (Mouse-ear cress), this protein is ABC transporter C family member 1 (ABCC1).